A 469-amino-acid polypeptide reads, in one-letter code: Argininosuccinate lyase (469 aa).

This sequence belongs to the lyase 1 family. Argininosuccinate lyase subfamily.

It is found in the cytoplasm. It catalyses the reaction 2-(N(omega)-L-arginino)succinate = fumarate + L-arginine. Its pathway is amino-acid biosynthesis; L-arginine biosynthesis; L-arginine from L-ornithine and carbamoyl phosphate: step 3/3. This Cupriavidus metallidurans (strain ATCC 43123 / DSM 2839 / NBRC 102507 / CH34) (Ralstonia metallidurans) protein is Argininosuccinate lyase.